The chain runs to 98 residues: Alpha-elicitin MGM-alpha (98 aa).

3 disulfide bridges follow: cysteine 3-cysteine 71, cysteine 27-cysteine 56, and cysteine 51-cysteine 95.

The protein belongs to the elicitin family.

It localises to the secreted. Induces local and distal defense responses (incompatible hypersensitive reaction) in plants from the solanaceae and cruciferae families. Elicits leaf necrosis and causes the accumulation of pathogenesis-related proteins. Might interact with the lipidic molecules of the plasma membrane. This is Alpha-elicitin MGM-alpha from Phytophthora megasperma (Potato pink rot fungus).